A 394-amino-acid polypeptide reads, in one-letter code: MSREMQDVDLAEVKPLVEKGETITSLLQEFDVQEQDIETLHGSVHVTLCGTPKGNRPVILTYHDIGMNHKTCYNPLFNYEDMQEITQHFAVCHVDAPGQQDGAASFPAGYMYPSMDQLAEMLPGVLQQFGLKSIIGMGTGAGAYILTRFALNNPEMVEGLVLINVNPCAEGWMDWAASKISGWTQALPDMVVSHLFGKEEMHSNVEVVHTYRQHIVNDMNPGNLHLFINAYNSRRDLEIERPMPGTHTVTLQCPALLVVGDSSPAVDAVVECNSKLDPTKTTLLKMADCGGLPQISQPAKLAEAFKYFVQGMGYMPSASMTRLMRSRTASGSSVTSLDGTRSRSHTSEGTRSRSHTSEGTRSRSHTSEGAHLDITPNSGAAGNNAGPKSMEVSC.

Ser2 carries the N-acetylserine modification. Ser2, Ser319, and Ser326 each carry phosphoserine. Residues 325–394 (RSRTASGSSV…AGPKSMEVSC (70 aa)) are disordered. A compositionally biased stretch (polar residues) spans 327–339 (RTASGSSVTSLDG). At Thr328 the chain carries Phosphothreonine; by SGK1. Phosphoserine; by SGK1 occurs at positions 330 and 332. Ser333 is modified (phosphoserine). The residue at position 335 (Thr335) is a Phosphothreonine. Ser336 bears the Phosphoserine mark. Tandem repeats lie at residues 339-348 (GTRSRSHTSE), 349-358 (GTRSRSHTSE), and 359-368 (GTRSRSHTSE). Residues 339 to 368 (GTRSRSHTSEGTRSRSHTSEGTRSRSHTSE) are 3 X 10 AA tandem repeats of G-[PST]-R-S-R-S-H-T-S-E. Thr340 is subject to Phosphothreonine. Phosphoserine is present on Ser342. Basic and acidic residues predominate over residues 345–371 (HTSEGTRSRSHTSEGTRSRSHTSEGAH). At Thr346 the chain carries Phosphothreonine; by SGK1. Position 352 is a phosphoserine (Ser352). Thr356 is subject to Phosphothreonine; by SGK1. 2 positions are modified to phosphoserine: Ser362 and Ser364. A phosphothreonine mark is found at Thr366 and Thr375.

It belongs to the NDRG family. As to quaternary structure, interacts with RAB4A (membrane-bound form); the interaction involves NDRG1 in vesicular recycling ofCDH1. Interacts with APOA1, APOA2, PRA1 and RTN1. In terms of processing, under stress conditions, phosphorylated in the C-terminal on many serine and threonine residues. Phosphorylated in vitro by PKA. Phosphorylation enhanced by increased intracellular cAMP levels. Homocysteine induces dephosphorylation. Phosphorylation by SGK1 is cell cycle dependent.

Its subcellular location is the cytoplasm. The protein resides in the cytosol. It localises to the cytoskeleton. It is found in the microtubule organizing center. The protein localises to the centrosome. Its subcellular location is the nucleus. The protein resides in the cell membrane. Its function is as follows. Stress-responsive protein involved in hormone responses, cell growth, and differentiation. Acts as a tumor suppressor in many cell types. Necessary but not sufficient for p53/TP53-mediated caspase activation and apoptosis. Has a role in cell trafficking notably of the Schwann cell and is necessary for the maintenance and development of the peripheral nerve myelin sheath. Required for vesicular recycling of CDH1 and TF. May also function in lipid trafficking. Protects cells from spindle disruption damage. Functions in p53/TP53-dependent mitotic spindle checkpoint. Regulates microtubule dynamics and maintains euploidy. This Macaca fascicularis (Crab-eating macaque) protein is Protein NDRG1 (Ndrg1).